A 231-amino-acid polypeptide reads, in one-letter code: Deoxyribose-phosphate aldolase (231 aa).

The Proton donor/acceptor role is filled by Asp97. Lys162 acts as the Schiff-base intermediate with acetaldehyde in catalysis. Residue Lys191 is the Proton donor/acceptor of the active site.

Belongs to the DeoC/FbaB aldolase family. DeoC type 1 subfamily.

Its subcellular location is the cytoplasm. It catalyses the reaction 2-deoxy-D-ribose 5-phosphate = D-glyceraldehyde 3-phosphate + acetaldehyde. Its pathway is carbohydrate degradation; 2-deoxy-D-ribose 1-phosphate degradation; D-glyceraldehyde 3-phosphate and acetaldehyde from 2-deoxy-alpha-D-ribose 1-phosphate: step 2/2. In terms of biological role, catalyzes a reversible aldol reaction between acetaldehyde and D-glyceraldehyde 3-phosphate to generate 2-deoxy-D-ribose 5-phosphate. This is Deoxyribose-phosphate aldolase from Caldanaerobacter subterraneus subsp. tengcongensis (strain DSM 15242 / JCM 11007 / NBRC 100824 / MB4) (Thermoanaerobacter tengcongensis).